A 129-amino-acid chain; its full sequence is Histone H2A-III (129 aa).

The interval Met1–Ala22 is disordered. An N-acetylserine modification is found at Ser2. Position 2 is a phosphoserine (Ser2). Lys6 bears the N6-(2-hydroxyisobutyryl)lysine mark. Lys6 and Lys10 each carry N6-acetyllysine. The span at Gln7–Ser19 shows a compositional bias: basic residues. N6-(2-hydroxyisobutyryl)lysine; alternate is present on Lys10. Position 10 is an N6-lactoyllysine; alternate (Lys10). Lys10 carries the post-translational modification N6-succinyllysine. Glycyl lysine isopeptide (Lys-Gly) (interchain with G-Cter in ubiquitin) cross-links involve residues Lys14 and Lys16. N6-(2-hydroxyisobutyryl)lysine; alternate is present on Lys37. An N6-(2-hydroxyisobutyryl)lysine mark is found at Lys75 and Lys76. N6-(2-hydroxyisobutyryl)lysine; alternate is present on Lys96. Residue Lys96 is modified to N6-succinyllysine. At Lys96 the chain carries N6-glutaryllysine; alternate. N6-glutaryllysine is present on Lys100. Position 105 is an N5-methylglutamine (Gln105). Lys119 is modified (N6-(2-hydroxyisobutyryl)lysine; alternate). Residues Lys119 and Lys120 each carry the N6-glutaryllysine; alternate modification. A Glycyl lysine isopeptide (Lys-Gly) (interchain with G-Cter in ubiquitin) cross-link involves residue Lys120.

This sequence belongs to the histone H2A family. The nucleosome is a histone octamer containing two molecules each of H2A, H2B, H3 and H4 assembled in one H3-H4 heterotetramer and two H2A-H2B heterodimers. The octamer wraps approximately 147 bp of DNA. In terms of processing, monoubiquitination of Lys-120 (H2AK119Ub) gives a specific tag for epigenetic transcriptional repression. Following DNA double-strand breaks (DSBs), it is ubiquitinated through 'Lys-63' linkage of ubiquitin moieties, leading to the recruitment of repair proteins to sites of DNA damage. H2AK119Ub and ionizing radiation-induced 'Lys-63'-linked ubiquitination are distinct events. Post-translationally, phosphorylation on Ser-2 is enhanced during mitosis. Phosphorylation on Ser-2 directly represses transcription. Glutamine methylation at Gln-105 (H2AQ104me) by FBL is specifically dedicated to polymerase I. It is present at 35S ribosomal DNA locus and impairs binding of the FACT complex.

It localises to the nucleus. It is found in the chromosome. Its function is as follows. Core component of nucleosome. Nucleosomes wrap and compact DNA into chromatin, limiting DNA accessibility to the cellular machineries which require DNA as a template. Histones thereby play a central role in transcription regulation, DNA repair, DNA replication and chromosomal stability. DNA accessibility is regulated via a complex set of post-translational modifications of histones, also called histone code, and nucleosome remodeling. This Gallus gallus (Chicken) protein is Histone H2A-III.